The following is a 483-amino-acid chain: Fructose-like PTS system EIIBC component (483 aa).

Residues 1-105 (MESSLRIVAI…IDQIFSELPT (105 aa)) form the PTS EIIB type-2 domain. C13 functions as the Phosphocysteine intermediate; for EIIB activity in the catalytic mechanism. C13 carries the phosphocysteine; by EIIA modification. In terms of domain architecture, PTS EIIC type-2 spans 128–475 (VMSHLMAGVS…LWLRRKAKAA (348 aa)). Transmembrane regions (helical) follow at residues 132 to 152 (LMAG…LVAL), 180 to 200 (IGYL…ASSI), 204 to 224 (PAFA…LLGT), 227 to 247 (GAGF…VFWF), 264 to 284 (LIPF…IGPV), 303 to 323 (MKFA…GGPI), 344 to 364 (AIVG…TFIA), 380 to 400 (IVVG…AAPL), 402 to 422 (MITA…AFGI), and 442 to 462 (VGSF…FIIV).

It localises to the cell inner membrane. The enzyme catalyses D-fructose(out) + N(pros)-phospho-L-histidyl-[protein] = D-fructose 1-phosphate(in) + L-histidyl-[protein]. Functionally, the phosphoenolpyruvate-dependent sugar phosphotransferase system (sugar PTS), a major carbohydrate active transport system, catalyzes the phosphorylation of incoming sugar substrates concomitantly with their translocation across the cell membrane. The enzyme II FrvAB PTS system is involved in fructose transport. The polypeptide is Fructose-like PTS system EIIBC component (Escherichia coli (strain K12)).